Here is a 234-residue protein sequence, read N- to C-terminus: uncharacterized protein (234 aa).

The HTH tetR-type domain occupies valine 24–threonine 83. Residues serine 46–phenylalanine 65 constitute a DNA-binding region (H-T-H motif).

This is an uncharacterized protein from Mycobacterium tuberculosis (strain CDC 1551 / Oshkosh).